The primary structure comprises 82 residues: Small ribosomal subunit protein uS12 (82 aa).

Asp-59 bears the 3-methylthioaspartic acid mark.

It belongs to the universal ribosomal protein uS12 family. In terms of assembly, part of the 30S ribosomal subunit. Contacts proteins S8 and S17. May interact with IF1 in the 30S initiation complex.

In terms of biological role, with S4 and S5 plays an important role in translational accuracy. Functionally, interacts with and stabilizes bases of the 16S rRNA that are involved in tRNA selection in the A site and with the mRNA backbone. Located at the interface of the 30S and 50S subunits, it traverses the body of the 30S subunit contacting proteins on the other side and probably holding the rRNA structure together. The combined cluster of proteins S8, S12 and S17 appears to hold together the shoulder and platform of the 30S subunit. The polypeptide is Small ribosomal subunit protein uS12 (rpsL) (Actinobacillus pleuropneumoniae (Haemophilus pleuropneumoniae)).